Reading from the N-terminus, the 122-residue chain is MKLTREEKRIKRHRRIRKKISGTASRPRLCMYRSLNAFYASLVDDITGNAILTVSSLGKEYVDATGKRGGKSIEAVQKVAEILVQKAKEKGIDKAVFDRSGYLYHGKVKAFAEKCRELGLIN.

This sequence belongs to the universal ribosomal protein uL18 family. As to quaternary structure, part of the 50S ribosomal subunit; part of the 5S rRNA/L5/L18/L25 subcomplex. Contacts the 5S and 23S rRNAs.

In terms of biological role, this is one of the proteins that bind and probably mediate the attachment of the 5S RNA into the large ribosomal subunit, where it forms part of the central protuberance. This Hydrogenobaculum sp. (strain Y04AAS1) protein is Large ribosomal subunit protein uL18.